Here is a 229-residue protein sequence, read N- to C-terminus: Urease accessory protein UreF (229 aa).

Belongs to the UreF family. In terms of assembly, ureD, UreF and UreG form a complex that acts as a GTP-hydrolysis-dependent molecular chaperone, activating the urease apoprotein by helping to assemble the nickel containing metallocenter of UreC. The UreE protein probably delivers the nickel.

It localises to the cytoplasm. Its function is as follows. Required for maturation of urease via the functional incorporation of the urease nickel metallocenter. The polypeptide is Urease accessory protein UreF (Corynebacterium efficiens (strain DSM 44549 / YS-314 / AJ 12310 / JCM 11189 / NBRC 100395)).